Reading from the N-terminus, the 647-residue chain is C2H2 finger domain transcription factor USV101 (647 aa).

Residues 1–10 (MSFVAPDDRA) show a composition bias toward basic and acidic residues. Positions 1-132 (MSFVAPDDRA…ATGYTPDGQP (132 aa)) are disordered. Composition is skewed to polar residues over residues 27-54 (ESTS…SPNQ) and 66-84 (SSHS…STAY). A compositionally biased stretch (low complexity) spans 97–122 (PTQQQQQQQSEQHIPSPPSSSNRPPS). 2 C2H2-type zinc fingers span residues 144–169 (FRCR…VRKH) and 175–197 (FPCH…ATVH). The tract at residues 220–647 (QRASREQRRR…VKQQDDKKTQ (428 aa)) is disordered. Residues 222 to 248 (ASREQRRRGEVVEVPKGAVERRRETRK) are compositionally biased toward basic and acidic residues. Positions 249-259 (AQAAAAQAAAA) are enriched in low complexity. The span at 261–278 (GHSQQNSPYAQYHESQWN) shows a compositional bias: polar residues. 3 stretches are compositionally biased toward low complexity: residues 312–327 (SSSA…YDSA), 404–414 (HGAYPPHDAAA), and 421–434 (GYYH…GSYP). Residues 504–515 (RAEDDFGKDDRK) are compositionally biased toward basic and acidic residues. Residues 521–540 (SPSNSQVPDSSTAAHANGAH) are compositionally biased toward low complexity. A compositionally biased stretch (basic and acidic residues) spans 628–647 (VDKEREKKEEVKQQDDKKTQ).

Its subcellular location is the nucleus. It localises to the cytoplasm. Functionally, transcription factor that promotes pheromone gene expression, which results in a subsequent increase in cell fusion. Also promotes production of melanin and capsule and thereby is required for full virulence. This Cryptococcus neoformans var. grubii serotype A (strain H99 / ATCC 208821 / CBS 10515 / FGSC 9487) (Filobasidiella neoformans var. grubii) protein is C2H2 finger domain transcription factor USV101.